The primary structure comprises 515 residues: MQLGRHNSGSIKKRLEMYILSIISASLDYKSAAIDIRERFSYTSTRIREILRRIKAADGVSGAVLLCTCNRTELYISGDNIENMNPALLLCQLSGEEDHKSLMTLFSIRHDSEAIFHLMEVACGLQSMVLFEDRVITQVKNAAAISREEKTIDSTLETLFRLCITAAKKAKTEIKVKAVPTSAAERAITELSKKYCFTDKRILVIGNGEIGRLCCKKLIELGAEITITLRKYKHGEIIIPVGCNTIPYDEREEVLPLSDVVISATTSPHFTITYDMIEKLERKPEIFVDLALPRDIESSISNFTGVELYNLDRFYTDYSVLNQKEVSKIREIINHFILQFEKWKDYREEAAFTKIPDLHNDTLYGRFPLFIDLSGKKVLVVGGGEIATRRVKTLLRFGADIYLVAPHLTSELQEMLNCKLINYREGYYESQDIQNMFLVIAATNDRETNHKVYLDAKEKGIQMSIADCREECSFYFPAIFEFDGIVGGLVSQNGDNHSLVKSVAEQIRKIGQATD.

Residues 26-27 and 47-48 contribute to the NAD(+) site; these read SL and IR. The tract at residues 26 to 174 is glutamyl-tRNA reductase; the sequence is SLDYKSAAID…TAAKKAKTEI (149 aa). L-glutamyl-tRNA(Glu) contacts are provided by residues 68–71, S127, E132, and Q138; that span reads TCNR. The active-site Nucleophile is C69. NADP(+) is bound at residue 206-211; the sequence is GNGEIG. A precorrin-2 dehydrogenase /sirohydrochlorin ferrochelatase region spans residues 367 to 507; that stretch reads FPLFIDLSGK…SLVKSVAEQI (141 aa).

In the N-terminal section; belongs to the glutamyl-tRNA reductase family. It in the C-terminal section; belongs to the precorrin-2 dehydrogenase / sirohydrochlorin ferrochelatase family. As to quaternary structure, homodimer.

The catalysed reaction is (S)-4-amino-5-oxopentanoate + tRNA(Glu) + NADP(+) = L-glutamyl-tRNA(Glu) + NADPH + H(+). The enzyme catalyses precorrin-2 + NAD(+) = sirohydrochlorin + NADH + 2 H(+). It catalyses the reaction siroheme + 2 H(+) = sirohydrochlorin + Fe(2+). It participates in cofactor biosynthesis; adenosylcobalamin biosynthesis; sirohydrochlorin from precorrin-2: step 1/1. Its pathway is porphyrin-containing compound metabolism; siroheme biosynthesis; siroheme from sirohydrochlorin: step 1/1. It functions in the pathway porphyrin-containing compound metabolism; siroheme biosynthesis; sirohydrochlorin from precorrin-2: step 1/1. The protein operates within porphyrin-containing compound metabolism; protoporphyrin-IX biosynthesis; 5-aminolevulinate from L-glutamyl-tRNA(Glu): step 1/2. Functionally, multifunctional enzyme that catalyzes the NADPH-dependent reduction of glutamyl-tRNA(Glu) to glutamate 1-semialdehyde (GSA), the NAD-dependent ring dehydrogenation of precorrin-2 to sirohydrochlorin and finally, the ferrochelation of sirohydrochlorin to yield siroheme. In Ruminiclostridium josui (Clostridium josui), this protein is Probable multifunctional siroheme biosynthesis protein HemA.